Consider the following 100-residue polypeptide: Small ribosomal subunit protein uS14c (100 aa).

It belongs to the universal ribosomal protein uS14 family. In terms of assembly, part of the 30S ribosomal subunit.

The protein resides in the plastid. Its subcellular location is the chloroplast. In terms of biological role, binds 16S rRNA, required for the assembly of 30S particles. This chain is Small ribosomal subunit protein uS14c, found in Crucihimalaya wallichii (Rock-cress).